Reading from the N-terminus, the 382-residue chain is Nonsense-mediated mRNA decay factor SMG9 (382 aa).

The interval 1–66 (MKKVEILKTP…PDSSVSKSSG (66 aa)) is disordered.

This sequence belongs to the SMG9 family.

Its function is as follows. Involved in nonsense-mediated decay (NMD) of mRNAs containing premature stop codons. Probable component of kinase complex containing smg-1 and recruited to stalled ribosomes. This chain is Nonsense-mediated mRNA decay factor SMG9 (smg-9), found in Caenorhabditis briggsae.